Here is a 151-residue protein sequence, read N- to C-terminus: Phosphoribosyl-AMP cyclohydrolase (151 aa).

The span at 1–13 (MMTLTFASPPQNK) shows a compositional bias: polar residues. A disordered region spans residues 1–20 (MMTLTFASPPQNKSDLETGP). Asp93 lines the Mg(2+) pocket. A Zn(2+)-binding site is contributed by Cys94. Mg(2+) is bound by residues Asp95 and Asp97. Zn(2+) contacts are provided by Cys112 and Cys119.

The protein belongs to the PRA-CH family. Homodimer. It depends on Mg(2+) as a cofactor. Zn(2+) serves as cofactor.

Its subcellular location is the cytoplasm. It carries out the reaction 1-(5-phospho-beta-D-ribosyl)-5'-AMP + H2O = 1-(5-phospho-beta-D-ribosyl)-5-[(5-phospho-beta-D-ribosylamino)methylideneamino]imidazole-4-carboxamide. Its pathway is amino-acid biosynthesis; L-histidine biosynthesis; L-histidine from 5-phospho-alpha-D-ribose 1-diphosphate: step 3/9. Its function is as follows. Catalyzes the hydrolysis of the adenine ring of phosphoribosyl-AMP. This Sinorhizobium medicae (strain WSM419) (Ensifer medicae) protein is Phosphoribosyl-AMP cyclohydrolase.